The sequence spans 357 residues: Holliday junction branch migration complex subunit RuvB (357 aa).

Residues 3–193 are large ATPase domain (RuvB-L); the sequence is WDDTTDAEAA…FGFTAHMEFY (191 aa). ATP contacts are provided by residues L32, R33, G74, K77, T78, T79, 140–142, R183, Y193, and R230; that span reads EDF. A Mg(2+)-binding site is contributed by T78. The tract at residues 194–264 is small ATPAse domain (RuvB-S); the sequence is GPAELERVIH…IAAAALAVYE (71 aa). Positions 267-357 are head domain (RuvB-H); that stretch reads ARGLDRLDRG…GNGQPDLFGA (91 aa). DNA contacts are provided by R303, R322, and R327. A disordered region spans residues 337–357; it reads LGLTPPRPQSSGNGQPDLFGA.

This sequence belongs to the RuvB family. As to quaternary structure, homohexamer. Forms an RuvA(8)-RuvB(12)-Holliday junction (HJ) complex. HJ DNA is sandwiched between 2 RuvA tetramers; dsDNA enters through RuvA and exits via RuvB. An RuvB hexamer assembles on each DNA strand where it exits the tetramer. Each RuvB hexamer is contacted by two RuvA subunits (via domain III) on 2 adjacent RuvB subunits; this complex drives branch migration. In the full resolvosome a probable DNA-RuvA(4)-RuvB(12)-RuvC(2) complex forms which resolves the HJ.

Its subcellular location is the cytoplasm. It carries out the reaction ATP + H2O = ADP + phosphate + H(+). In terms of biological role, the RuvA-RuvB-RuvC complex processes Holliday junction (HJ) DNA during genetic recombination and DNA repair, while the RuvA-RuvB complex plays an important role in the rescue of blocked DNA replication forks via replication fork reversal (RFR). RuvA specifically binds to HJ cruciform DNA, conferring on it an open structure. The RuvB hexamer acts as an ATP-dependent pump, pulling dsDNA into and through the RuvAB complex. RuvB forms 2 homohexamers on either side of HJ DNA bound by 1 or 2 RuvA tetramers; 4 subunits per hexamer contact DNA at a time. Coordinated motions by a converter formed by DNA-disengaged RuvB subunits stimulates ATP hydrolysis and nucleotide exchange. Immobilization of the converter enables RuvB to convert the ATP-contained energy into a lever motion, pulling 2 nucleotides of DNA out of the RuvA tetramer per ATP hydrolyzed, thus driving DNA branch migration. The RuvB motors rotate together with the DNA substrate, which together with the progressing nucleotide cycle form the mechanistic basis for DNA recombination by continuous HJ branch migration. Branch migration allows RuvC to scan DNA until it finds its consensus sequence, where it cleaves and resolves cruciform DNA. This is Holliday junction branch migration complex subunit RuvB from Streptomyces coelicolor (strain ATCC BAA-471 / A3(2) / M145).